The following is a 1040-amino-acid chain: Putative protein tag-76 (1040 aa).

Residues 1–15 are compositionally biased toward polar residues; the sequence is MSRRNATSFVDNNTL. Disordered stretches follow at residues 1-61 and 322-367; these read MSRR…GSVS and RTSK…PGAN. Low complexity predominate over residues 16–32; that stretch reads TSSGISGSGSMSPPITS. Residues 33 to 50 are compositionally biased toward polar residues; sequence RPASGQASPLTSNGSLSP. Gly residues predominate over residues 333 to 356; sequence GPGGPGGPGGYRGGRGGGRGGSYG. Residues 379–486 form the PAZ domain; sequence FTMDTLSRDT…LPMEHCLIDS (108 aa). The Piwi domain occupies 660 to 966; that stretch reads CIIVVLQSKN…VATRARCHVK (307 aa).

In Caenorhabditis elegans, this protein is Putative protein tag-76 (tag-76).